Reading from the N-terminus, the 214-residue chain is MPLVALGVADLFNFVDYSKTSLAISAAAIAFNPTFWNIVARREYRTKFLTRAFGGNAQVACYFLAVTIFGLGLVRDFLYERALRDQPSHPLLEGTYVKYAAYALLALGNLLVITSTMRLGITGTFLGDYFGILMDGIVTGFPFNVTSAPMYYGSTMSFLGTALLYGKPAGLLLTAWVLFVYIIAIQFENPFTAEIYAKRDRERAKAAGTSKKEL.

The Lumenal portion of the chain corresponds to 1 to 19 (MPLVALGVADLFNFVDYSK). Positions 20–40 (TSLAISAAAIAFNPTFWNIVA) form an intramembrane region, helical. Residues 41–52 (RREYRTKFLTRA) lie on the Lumenal side of the membrane. Residues 53 to 74 (FGGNAQVACYFLAVTIFGLGLV) form a helical membrane-spanning segment. At 75 to 101 (RDFLYERALRDQPSHPLLEGTYVKYAA) the chain is on the cytoplasmic side. A helical membrane pass occupies residues 102–122 (YALLALGNLLVITSTMRLGIT). Residue 106–108 (ALG) participates in S-adenosyl-L-methionine binding. The Lumenal portion of the chain corresponds to 123–165 (GTFLGDYFGILMDGIVTGFPFNVTSAPMYYGSTMSFLGTALLY). Residues 166-186 (GKPAGLLLTAWVLFVYIIAIQ) form a helical membrane-spanning segment. Residues 187-214 (FENPFTAEIYAKRDRERAKAAGTSKKEL) are Cytoplasmic-facing. 188–189 (EN) serves as a coordination point for S-adenosyl-L-methionine.

This sequence belongs to the class VI-like SAM-binding methyltransferase superfamily. PEMT/PEM2 methyltransferase family.

Its subcellular location is the endoplasmic reticulum membrane. The protein localises to the mitochondrion membrane. The enzyme catalyses a 1,2-diacyl-sn-glycero-3-phospho-N-methylethanolamine + S-adenosyl-L-methionine = a 1,2-diacyl-sn-glycero-3-phospho-N,N-dimethylethanolamine + S-adenosyl-L-homocysteine + H(+). It catalyses the reaction a 1,2-diacyl-sn-glycero-3-phospho-N,N-dimethylethanolamine + S-adenosyl-L-methionine = a 1,2-diacyl-sn-glycero-3-phosphocholine + S-adenosyl-L-homocysteine + H(+). It participates in phospholipid metabolism; phosphatidylcholine biosynthesis. Catalyzes the second two steps of the methylation pathway of phosphatidylcholine biosynthesis, the SAM-dependent methylation of phosphatidylmonomethylethanolamine (PMME) to phosphatidyldimethylethanolamine (PDME) and of PDME to phosphatidylcholine (PC). In Neurospora crassa (strain ATCC 24698 / 74-OR23-1A / CBS 708.71 / DSM 1257 / FGSC 987), this protein is Phosphatidyl-N-methylethanolamine N-methyltransferase.